The sequence spans 332 residues: uncharacterized protein (332 aa).

The helical transmembrane segment at 27–47 threads the bilayer; that stretch reads CAIVFLCVLLILPFLSCCTSL.

It is found in the membrane. This is an uncharacterized protein from Treponema pallidum (strain Nichols).